Here is a 184-residue protein sequence, read N- to C-terminus: Photosystem I assembly protein Ycf4 (184 aa).

2 consecutive transmembrane segments (helical) span residues 22-42 and 57-77; these read FCWA…GTSS and IIFF…LFIS.

The protein belongs to the Ycf4 family.

Its subcellular location is the plastid. It is found in the chloroplast thylakoid membrane. Its function is as follows. Seems to be required for the assembly of the photosystem I complex. This chain is Photosystem I assembly protein Ycf4, found in Arabis hirsuta (Hairy rock-cress).